We begin with the raw amino-acid sequence, 180 residues long: Dual-action ribosomal maturation protein DarP (180 aa).

The protein belongs to the DarP family.

The protein localises to the cytoplasm. Its function is as follows. Member of a network of 50S ribosomal subunit biogenesis factors which assembles along the 30S-50S interface, preventing incorrect 23S rRNA structures from forming. Promotes peptidyl transferase center (PTC) maturation. In Chromobacterium violaceum (strain ATCC 12472 / DSM 30191 / JCM 1249 / CCUG 213 / NBRC 12614 / NCIMB 9131 / NCTC 9757 / MK), this protein is Dual-action ribosomal maturation protein DarP.